The chain runs to 742 residues: Probable serine/threonine-protein kinase PkwA (742 aa).

Residues 16–266 (YRLVSRLGAG…TAELLAQLST (251 aa)) enclose the Protein kinase domain. Residues 22–30 (LGAGGMGQV) and Lys44 contribute to the ATP site. The Proton acceptor role is filled by Asp138. The segment at 266–394 (TDHTGDDWPP…PWSPPRVQPP (129 aa)) is disordered. The span at 301-318 (EPPPPSHGPPRPSEPLPD) shows a compositional bias: pro residues. Over residues 343-356 (LEEKPIQVIHEPER) the composition is skewed to basic and acidic residues. Residues 377–392 (PRPAAPQPPWSPPRVQ) are compositionally biased toward pro residues. WD repeat units follow at residues 455–496 (ILTT…ELHT), 497–538 (LEGH…ERAV), 539–580 (FEGH…EHAV), 581–621 (LKGH…KERD), 622–663 (VLQA…ALHT), 664–705 (FEGH…EHTT), and 706–742 (LEGH…IATE).

Belongs to the protein kinase superfamily. Ser/Thr protein kinase family.

It carries out the reaction L-seryl-[protein] + ATP = O-phospho-L-seryl-[protein] + ADP + H(+). The catalysed reaction is L-threonyl-[protein] + ATP = O-phospho-L-threonyl-[protein] + ADP + H(+). Functionally, may play a regulatory role during the complex growth cycle and in secondary metabolite production. The protein is Probable serine/threonine-protein kinase PkwA (pkwA) of Thermomonospora curvata.